Consider the following 269-residue polypeptide: Phosphate import ATP-binding protein PstB (269 aa).

One can recognise an ABC transporter domain in the interval 14 to 253 (LTLEDVSISY…EFDSTKKIFS (240 aa)). ATP is bound at residue 46–53 (GPSGCGKS).

It belongs to the ABC transporter superfamily. Phosphate importer (TC 3.A.1.7) family. In terms of assembly, the complex is composed of two ATP-binding proteins (PstB), two transmembrane proteins (PstC and PstA) and a solute-binding protein (PstS).

The protein localises to the cell inner membrane. It catalyses the reaction phosphate(out) + ATP + H2O = ADP + 2 phosphate(in) + H(+). Its function is as follows. Part of the ABC transporter complex PstSACB involved in phosphate import. Responsible for energy coupling to the transport system. This chain is Phosphate import ATP-binding protein PstB, found in Prochlorococcus marinus subsp. pastoris (strain CCMP1986 / NIES-2087 / MED4).